A 917-amino-acid chain; its full sequence is Outer membrane protein SlpA (917 aa).

Residues 1–23 (MKKRLVTLLAGLLTVLSMGFGLA) form the signal peptide. Positions 24–84 (QFSDVPAGHW…QQIEEELKTQ (61 aa)) constitute an SLH domain.

In terms of assembly, homotrimer.

The protein resides in the cell outer membrane. Functionally, plays an important role in the structural organization and integrity of the cell envelope, bridging the outer membrane to the peptidoglyan layer. Appears to be a nonselective channel. In Thermus thermophilus (strain ATCC 27634 / DSM 579 / HB8), this protein is Outer membrane protein SlpA (slpA).